The sequence spans 561 residues: MCLRSLFLVSLATCVVCGNPSSPPVVDTMKGKVLGKYASLEGVTQSVAVFLGVPFAKPPLGSLRFAPPQPAEPWSFVKNTTTYPPMCSQDATKGQRMNDLLTNRKEKVHLQFSEDCLYLNIYTPADFTKDSRMPVMVWIHGGGLTQGGASTYDGQVLSAYENVVVVAIQYRLGIWGFFSTGDEHSRGNWGHLDQVAALHWVQDNIANFGGDPGSVTIFGESAGGFSVSVLVLSPLSKNLYHRAISESGVVLITELFTKDVRPAAKQIADMAGCKTTTSAIIVHCLRQKTEEELLEIMEKMNLIKLSSQRDTKESYHFLSTVIDDVVLPKDPKEILAEKNFNTVPYIVGINKQECGWLLPTMMRFVPPDVKLDKKMAIMLLEKFASIYGIPEDIIPVAIEKYRKGSDDPIKIRDGILAFIGDVLFCIPSVMVSRDHRDAGAPTYVYEYQYYPSFSSPQRPKDVVGDHADDVYSVFGAPILRDGASEEEIKLSKMVMKFWANFARNGNPNARGLPHWPQYDQKEEYLQIGATTQQSQRLKAEEVAFWTQLLAKRQPQPHHNEL.

The N-terminal stretch at 1–18 (MCLRSLFLVSLATCVVCG) is a signal peptide. N-linked (GlcNAc...) asparagine glycosylation is present at Asn79. Cys87 and Cys116 are oxidised to a cystine. Ser221 serves as the catalytic Acyl-ester intermediate. Cys273 and Cys284 form a disulfide bridge. Catalysis depends on charge relay system residues Glu353 and His466. The short motif at 558 to 561 (HNEL) is the Prevents secretion from ER element.

Belongs to the type-B carboxylesterase/lipase family. As to quaternary structure, monomer.

Its subcellular location is the endoplasmic reticulum lumen. It carries out the reaction a carboxylic ester + H2O = an alcohol + a carboxylate + H(+). Functionally, involved in the detoxification of xenobiotics and in the activation of ester and amide prodrugs. The sequence is that of Liver carboxylesterase B-1 from Rattus norvegicus (Rat).